Consider the following 2200-residue polypeptide: Non-reducing polyketide synthase tpeB (2200 aa).

One can recognise a Starter acyltransferase (SAT) domain in the interval 16-255; sequence FFGDQTVDTL…MDLPLGTPAH (240 aa). The region spanning 382 to 815 is the Ketosynthase family 3 (KS3) domain; that stretch reads SNMIAIVGQS…GGNNCVLLEE (434 aa). Active-site for beta-ketoacyl synthase activity residues include Cys-554, His-690, and His-729. The Malonyl-CoA:ACP transacylase (MAT) domain occupies 914–1202; that stretch reads VFAFTGQGSQ…VLNSFIKATL (289 aa). The segment at 1296–1621 is product template (PT) domain; sequence TASLQRVREE…TKRILTTILG (326 aa). The interval 1300–1433 is N-terminal hotdog fold; the sequence is QRVREERIQG…CKIRFESKAD (134 aa). The 318-residue stretch at 1300 to 1617 folds into the PKS/mFAS DH domain; the sequence is QRVREERIQG…FQRLTKRILT (318 aa). Catalysis depends on His-1332, which acts as the Proton acceptor; for dehydratase activity. Residues 1462–1617 are C-terminal hotdog fold; the sequence is NGHKLPKPVV…FQRLTKRILT (156 aa). Asp-1522 acts as the Proton donor; for dehydratase activity in catalysis. The tract at residues 1625–1652 is disordered; sequence DHHNSNEVRNGNATTTHTNPPAHATTQS. Residues 1636 to 1650 are compositionally biased toward low complexity; that stretch reads NATTTHTNPPAHATT. Carrier domains are found at residues 1671-1748 and 1791-1865; these read TVGE…AELP and ANYA…GPNT. 2 positions are modified to O-(pantetheine 4'-phosphoryl)serine: Ser-1708 and Ser-1825. A thioesterase (TE) domain region spans residues 1931-2173; sequence MFFLPDGTGY…TVPCDHLSIM (243 aa).

Pantetheine 4'-phosphate is required as a cofactor.

The protein operates within secondary metabolite biosynthesis. Its function is as follows. Non-reducing polyketide synthase; part of the gene cluster that mediates the biosynthesis of polyesters containing 2,4-dihydroxy-6-(2-hydroxypropyl)benzoate and 3-hydroxybutyrate moieties, such as talapolyester G, 15G256beta and 15G256beta-2; as well as to oxidized derivatives such as 15G256alpha. The biosynthesis of the polyesters probably starts with the formation of the diketide 3-hydroxybutyryl-S-ACP catalyzed by the partially reducing polyketide synthase tpeA. The acceptance of 3-hydroxybutyryl by the non-reducing polyketide synthase tpeB would initiate further elongation and cyclization, catalyzed by KS and PT, respectively, to form 2,4-dihydroxy-6-(2-hydroxyn-propyl)benzoyl-S-ACP intermediate. The TE domain could catalyze lactonization at this step to yield 6-hydroxymellein as a derailment product. The polyesterification process maybe occurs when additional molecules of 3-hydroxybutyryl are transferred to tpeB. Following the first esterification step, an intramolecular cyclization catalyzed by the TE domain of tpeB would give talarodioxadione 1, whereas the ethyl esterification of talapolyester G perhaps happens spontaneously. Further oxidation by the cytochrome P450 monooxygenase tpeC then leads to the formation of oxidized derivatives. The chain is Non-reducing polyketide synthase tpeB from Talaromyces stipitatus (strain ATCC 10500 / CBS 375.48 / QM 6759 / NRRL 1006) (Penicillium stipitatum).